A 264-amino-acid chain; its full sequence is MPRSLKRAQLRSLLPRPPAVSHTQPWYRAAHPTTSPTAASRDVHPASGAVPGPWLVEGTAVREGPQLQDAVPQRPTRPSKALWPAQMSAAPAIRLGQMVPGDTRGLWGPQGTLLTWTYRGGQGGRWTRRAEGPREGTFAEQRPHFQSSGAQQESRLAMGPPPLGLGDAAGDGRGQTGQEKGRAEGRQARKSACKCPRKGPNPGPWTRAAAWWGRLEGAKASAKGEQVRDPGGHLWEQGHVSPCARFNQGHSCGSPKVSHTTWVS.

Disordered stretches follow at residues 1 to 52 and 123 to 207; these read MPRS…AVPG and GGRW…PWTR. A compositionally biased stretch (low complexity) spans 29–40; that stretch reads AAHPTTSPTAAS. Residues 144–154 are compositionally biased toward polar residues; that stretch reads HFQSSGAQQES. Positions 188 to 197 are enriched in basic residues; it reads ARKSACKCPR.

This is an uncharacterized protein from Homo sapiens (Human).